Reading from the N-terminus, the 331-residue chain is 6-phosphogluconolactonase (331 aa).

An N6-acetyllysine modification is found at lysine 287.

The protein belongs to the cycloisomerase 2 family.

It catalyses the reaction 6-phospho-D-glucono-1,5-lactone + H2O = 6-phospho-D-gluconate + H(+). Its pathway is carbohydrate degradation; pentose phosphate pathway; D-ribulose 5-phosphate from D-glucose 6-phosphate (oxidative stage): step 2/3. In terms of biological role, catalyzes the hydrolysis of 6-phosphogluconolactone to 6-phosphogluconate. The polypeptide is 6-phosphogluconolactonase (Escherichia coli O157:H7).